The sequence spans 422 residues: SH2 domain-containing protein 4A (422 aa).

Phosphoserine occurs at positions 117 and 123. Disordered stretches follow at residues 141–190 (PQNV…EDEK) and 202–282 (SEWQ…VIRT). 2 stretches are compositionally biased toward basic and acidic residues: residues 163-190 (TKKD…EDEK) and 212-231 (KAAD…DYKR). At serine 233 the chain carries Phosphoserine. The SH2 domain occupies 316-408 (WFHGILTLKK…LGKELLLFPC (93 aa)).

In terms of assembly, interacts with ESR1.

Its subcellular location is the cytoplasm. Inhibits estrogen-induced cell proliferation by competing with PLCG for binding to ESR1, blocking the effect of estrogen on PLCG and repressing estrogen-induced proliferation. May play a role in T-cell development and function. This Rattus norvegicus (Rat) protein is SH2 domain-containing protein 4A (Sh2d4a).